We begin with the raw amino-acid sequence, 389 residues long: Probable L-tyrosine/L-aspartate decarboxylase (389 aa).

Lys-233 is modified (N6-(pyridoxal phosphate)lysine).

Belongs to the group II decarboxylase family. MfnA subfamily. Pyridoxal 5'-phosphate is required as a cofactor.

It carries out the reaction L-tyrosine + H(+) = tyramine + CO2. The catalysed reaction is L-aspartate + H(+) = beta-alanine + CO2. Its pathway is cofactor biosynthesis; methanofuran biosynthesis. The protein operates within cofactor biosynthesis; coenzyme A biosynthesis. Catalyzes the decarboxylation of L-tyrosine to produce tyramine for methanofuran biosynthesis. Can also catalyze the decarboxylation of L-aspartate to produce beta-alanine for coenzyme A (CoA) biosynthesis. The sequence is that of Probable L-tyrosine/L-aspartate decarboxylase from Methanosphaera stadtmanae (strain ATCC 43021 / DSM 3091 / JCM 11832 / MCB-3).